The chain runs to 346 residues: Thiamine-phosphate synthase (346 aa).

Residues 1–125 (MSVTPNPDQH…SKISAQIRYE (125 aa)) form a unknown region. The thiamine-phosphate synthase stretch occupies residues 126–346 (IYDLEVIILK…SKELLGKLKK (221 aa)). 4-amino-2-methyl-5-(diphosphooxymethyl)pyrimidine-binding positions include 177–181 (QYRCK) and Asn-209. Residues Asp-210 and Asp-229 each contribute to the Mg(2+) site. Ser-248 contributes to the 4-amino-2-methyl-5-(diphosphooxymethyl)pyrimidine binding site. Residue 274 to 276 (TKS) participates in 2-[(2R,5Z)-2-carboxy-4-methylthiazol-5(2H)-ylidene]ethyl phosphate binding. Position 277 (Lys-277) interacts with 4-amino-2-methyl-5-(diphosphooxymethyl)pyrimidine. Gly-304 is a binding site for 2-[(2R,5Z)-2-carboxy-4-methylthiazol-5(2H)-ylidene]ethyl phosphate.

Belongs to the thiamine-phosphate synthase family. Mg(2+) is required as a cofactor.

The catalysed reaction is 2-[(2R,5Z)-2-carboxy-4-methylthiazol-5(2H)-ylidene]ethyl phosphate + 4-amino-2-methyl-5-(diphosphooxymethyl)pyrimidine + 2 H(+) = thiamine phosphate + CO2 + diphosphate. The enzyme catalyses 2-(2-carboxy-4-methylthiazol-5-yl)ethyl phosphate + 4-amino-2-methyl-5-(diphosphooxymethyl)pyrimidine + 2 H(+) = thiamine phosphate + CO2 + diphosphate. It catalyses the reaction 4-methyl-5-(2-phosphooxyethyl)-thiazole + 4-amino-2-methyl-5-(diphosphooxymethyl)pyrimidine + H(+) = thiamine phosphate + diphosphate. It participates in cofactor biosynthesis; thiamine diphosphate biosynthesis; thiamine phosphate from 4-amino-2-methyl-5-diphosphomethylpyrimidine and 4-methyl-5-(2-phosphoethyl)-thiazole: step 1/1. Condenses 4-methyl-5-(beta-hydroxyethyl)thiazole monophosphate (THZ-P) and 2-methyl-4-amino-5-hydroxymethyl pyrimidine pyrophosphate (HMP-PP) to form thiamine monophosphate (TMP). In Prochlorococcus marinus (strain SARG / CCMP1375 / SS120), this protein is Thiamine-phosphate synthase.